The chain runs to 152 residues: Small ribosomal subunit protein uS13 (152 aa).

It belongs to the universal ribosomal protein uS13 family.

The protein resides in the cytoplasm. In terms of biological role, located at the top of the head of the 40S subunit, it contacts several helices of the 18S rRNA. This is Small ribosomal subunit protein uS13 (RPS18) from Branchiostoma belcheri (Amphioxus).